We begin with the raw amino-acid sequence, 184 residues long: ATP synthase subunit b, chloroplastic (184 aa).

A helical transmembrane segment spans residues 27–49; the sequence is LATNPINLSVVLGVLIFFGKGVL.

It belongs to the ATPase B chain family. F-type ATPases have 2 components, F(1) - the catalytic core - and F(0) - the membrane proton channel. F(1) has five subunits: alpha(3), beta(3), gamma(1), delta(1), epsilon(1). F(0) has four main subunits: a(1), b(1), b'(1) and c(10-14). The alpha and beta chains form an alternating ring which encloses part of the gamma chain. F(1) is attached to F(0) by a central stalk formed by the gamma and epsilon chains, while a peripheral stalk is formed by the delta, b and b' chains.

The protein resides in the plastid. Its subcellular location is the chloroplast thylakoid membrane. F(1)F(0) ATP synthase produces ATP from ADP in the presence of a proton or sodium gradient. F-type ATPases consist of two structural domains, F(1) containing the extramembraneous catalytic core and F(0) containing the membrane proton channel, linked together by a central stalk and a peripheral stalk. During catalysis, ATP synthesis in the catalytic domain of F(1) is coupled via a rotary mechanism of the central stalk subunits to proton translocation. Its function is as follows. Component of the F(0) channel, it forms part of the peripheral stalk, linking F(1) to F(0). The protein is ATP synthase subunit b, chloroplastic of Piper cenocladum (Ant piper).